The chain runs to 430 residues: N-acylneuraminate cytidylyltransferase A (430 aa).

Residues 1-29 (MDAVNENGKRAMKDDSHGNSTSPKRRKSR) are disordered. Over residues 7-17 (NGKRAMKDDSH) the composition is skewed to basic and acidic residues. The Bipartite nuclear localization signal signature appears at 9-27 (KRAMKDDSHGNSTSPKRRK). Substrate-binding residues include R38, N48, R97, S106, S108, and Q129. Residue R187 is part of the active site.

This sequence belongs to the CMP-NeuNAc synthase family. Homotetramer.

The protein resides in the nucleus. It catalyses the reaction an N-acylneuraminate + CTP = a CMP-N-acyl-beta-neuraminate + diphosphate. The protein operates within amino-sugar metabolism; N-acetylneuraminate metabolism. Catalyzes the activation of N-acetylneuraminic acid (NeuNAc) to cytidine 5'-monophosphate N-acetylneuraminic acid (CMP-NeuNAc), a substrate required for the addition of sialic acid. Also has activity towards N-glycolylneuraminic acid (Neu5Gc). Has weak activity towards 2-keto-3-deoxy-D-glycero-D-galacto-nononic acid (KDN). This chain is N-acylneuraminate cytidylyltransferase A, found in Danio rerio (Zebrafish).